Reading from the N-terminus, the 395-residue chain is S-adenosylmethionine synthase (395 aa).

ATP is bound at residue H14. D16 is a Mg(2+) binding site. Residue E42 coordinates K(+). Positions 55 and 98 each coordinate L-methionine. A flexible loop region spans residues 98–108 (QSPDIALGVDK). ATP-binding positions include 175 to 177 (DGK), 242 to 243 (RF), D251, 257 to 258 (RK), A274, and K278. L-methionine is bound at residue D251. Position 282 (K282) interacts with L-methionine.

This sequence belongs to the AdoMet synthase family. Homotetramer; dimer of dimers. It depends on Mg(2+) as a cofactor. K(+) is required as a cofactor.

The protein localises to the cytoplasm. The enzyme catalyses L-methionine + ATP + H2O = S-adenosyl-L-methionine + phosphate + diphosphate. The protein operates within amino-acid biosynthesis; S-adenosyl-L-methionine biosynthesis; S-adenosyl-L-methionine from L-methionine: step 1/1. In terms of biological role, catalyzes the formation of S-adenosylmethionine (AdoMet) from methionine and ATP. The overall synthetic reaction is composed of two sequential steps, AdoMet formation and the subsequent tripolyphosphate hydrolysis which occurs prior to release of AdoMet from the enzyme. This is S-adenosylmethionine synthase from Thermosipho africanus (strain TCF52B).